A 325-amino-acid chain; its full sequence is Peroxidase RIP1 (325 aa).

The signal sequence occupies residues M1–S21. 4 disulfides stabilise this stretch: C38–C118, C71–C76, C125–C321, and C206–C231. The active-site Proton acceptor is H69. Residues D70, V73, G75, D77, and S79 each contribute to the Ca(2+) site. Residue N87 is glycosylated (N-linked (GlcNAc...) asparagine). P169 lines the substrate pocket. An N-linked (GlcNAc...) asparagine glycan is attached at N174. Residue H199 participates in heme b binding. T200 is a binding site for Ca(2+). N215 carries an N-linked (GlcNAc...) asparagine glycan. Residues D244, T246, and E251 each contribute to the Ca(2+) site.

The protein belongs to the peroxidase family. Classical plant (class III) peroxidase subfamily. It depends on heme b as a cofactor. Requires Ca(2+) as cofactor. In terms of tissue distribution, expressed in the differentiating root epidermis following inoculation with the bacterial symbiont Sinorhizobium meliloti.

It localises to the secreted. The catalysed reaction is 2 a phenolic donor + H2O2 = 2 a phenolic radical donor + 2 H2O. Its function is as follows. Removal of H(2)O(2), oxidation of toxic reductants, biosynthesis and degradation of lignin, suberization, auxin catabolism, response to environmental stresses such as wounding, pathogen attack and oxidative stress. These functions might be dependent on each isozyme/isoform in each plant tissue. This is Peroxidase RIP1 from Medicago truncatula (Barrel medic).